A 610-amino-acid polypeptide reads, in one-letter code: ATP-dependent zinc metalloprotease FtsH (610 aa).

Residues 1–3 (MAK) lie on the Cytoplasmic side of the membrane. A helical transmembrane segment spans residues 4-24 (NLMLWLVIAVVLMSIFQNFSA). At 25–97 (NNINNRKIDY…IIGAAPEEQS (73 aa)) the chain is on the extracellular side. Residues 98–118 (FFTAIFISWFPMLLLIGVWVF) traverse the membrane as a helical segment. The Cytoplasmic segment spans residues 119-610 (FMRQMQVGGG…SNICTDDDNN (492 aa)). ATP is bound at residue 192 to 199 (GPPGTGKT). Residue histidine 414 participates in Zn(2+) binding. Glutamate 415 is an active-site residue. Residues histidine 418 and aspartate 492 each contribute to the Zn(2+) site.

The protein in the central section; belongs to the AAA ATPase family. This sequence in the C-terminal section; belongs to the peptidase M41 family. In terms of assembly, homohexamer. The cofactor is Zn(2+).

Its subcellular location is the cell membrane. Acts as a processive, ATP-dependent zinc metallopeptidase for both cytoplasmic and membrane proteins. Plays a role in the quality control of integral membrane proteins. In Buchnera aphidicola subsp. Baizongia pistaciae (strain Bp), this protein is ATP-dependent zinc metalloprotease FtsH.